The following is a 698-amino-acid chain: tRNA (guanine(37)-N(1))-methyltransferase (698 aa).

Positions 233–254 are disordered; it reads DSTAHDSVQRNEGKTPKGPLDG. The segment covering 234–247 has biased composition (basic and acidic residues); it reads STAHDSVQRNEGKT. Residues arginine 394, 432 to 433, and 459 to 460 each bind S-adenosyl-L-methionine; these read DI and DA. Disordered stretches follow at residues 500–522 and 534–582; these read PDQNNVDTGKRKKRESDRVGHVD and KKKL…DAPR. Composition is skewed to basic and acidic residues over residues 513-522, 539-550, and 569-582; these read RESDRVGHVD, HADTNDPLEERP, and TNNDSEKTKEDAPR. An S-adenosyl-L-methionine-binding site is contributed by asparagine 603.

This sequence belongs to the class I-like SAM-binding methyltransferase superfamily. TRM5/TYW2 family. As to quaternary structure, monomer.

The protein resides in the mitochondrion matrix. It localises to the nucleus. Its subcellular location is the cytoplasm. It carries out the reaction guanosine(37) in tRNA + S-adenosyl-L-methionine = N(1)-methylguanosine(37) in tRNA + S-adenosyl-L-homocysteine + H(+). Functionally, specifically methylates the N1 position of guanosine-37 in various cytoplasmic and mitochondrial tRNAs. Methylation is not dependent on the nature of the nucleoside 5' of the target nucleoside. This is the first step in the biosynthesis of wybutosine (yW), a modified base adjacent to the anticodon of tRNAs and required for accurate decoding. The polypeptide is tRNA (guanine(37)-N(1))-methyltransferase (Plasmodium knowlesi (strain H)).